The sequence spans 99 residues: MITAELTVIPLGTCSTSLSSYVAAAVEALKKLNVRYEISGMGTLLEAEDLDELMEAVKAAHEAVLQAGSDRVYTTLKIDDRRDADRGLRDKVESVKEKI.

The protein belongs to the UPF0045 family. Homotetramer.

This chain is UPF0045 protein MTH_1187, found in Methanothermobacter thermautotrophicus (strain ATCC 29096 / DSM 1053 / JCM 10044 / NBRC 100330 / Delta H) (Methanobacterium thermoautotrophicum).